We begin with the raw amino-acid sequence, 206 residues long: Urease accessory protein UreG (206 aa).

14-21 (GPVGSGKT) provides a ligand contact to GTP.

Belongs to the SIMIBI class G3E GTPase family. UreG subfamily. As to quaternary structure, homodimer. UreD, UreF and UreG form a complex that acts as a GTP-hydrolysis-dependent molecular chaperone, activating the urease apoprotein by helping to assemble the nickel containing metallocenter of UreC. The UreE protein probably delivers the nickel.

It is found in the cytoplasm. Its function is as follows. Facilitates the functional incorporation of the urease nickel metallocenter. This process requires GTP hydrolysis, probably effectuated by UreG. In Methylocella silvestris (strain DSM 15510 / CIP 108128 / LMG 27833 / NCIMB 13906 / BL2), this protein is Urease accessory protein UreG.